Reading from the N-terminus, the 471-residue chain is tRNA-2-methylthio-N(6)-dimethylallyladenosine synthase (471 aa).

Residues Lys-36–Thr-154 enclose the MTTase N-terminal domain. The [4Fe-4S] cluster site is built by Cys-45, Cys-81, Cys-115, Cys-191, Cys-195, and Cys-198. One can recognise a Radical SAM core domain in the interval Arg-177–Lys-407. A TRAM domain is found at Gln-410–Ile-471.

The protein belongs to the methylthiotransferase family. MiaB subfamily. As to quaternary structure, monomer. The cofactor is [4Fe-4S] cluster.

Its subcellular location is the cytoplasm. The enzyme catalyses N(6)-dimethylallyladenosine(37) in tRNA + (sulfur carrier)-SH + AH2 + 2 S-adenosyl-L-methionine = 2-methylsulfanyl-N(6)-dimethylallyladenosine(37) in tRNA + (sulfur carrier)-H + 5'-deoxyadenosine + L-methionine + A + S-adenosyl-L-homocysteine + 2 H(+). Functionally, catalyzes the methylthiolation of N6-(dimethylallyl)adenosine (i(6)A), leading to the formation of 2-methylthio-N6-(dimethylallyl)adenosine (ms(2)i(6)A) at position 37 in tRNAs that read codons beginning with uridine. This Caldicellulosiruptor saccharolyticus (strain ATCC 43494 / DSM 8903 / Tp8T 6331) protein is tRNA-2-methylthio-N(6)-dimethylallyladenosine synthase.